The chain runs to 518 residues: Calcium-dependent protein kinase 1 (518 aa).

A compositionally biased stretch (basic residues) spans 1–10 (MGNRTSRHHR). Residues 1–49 (MGNRTSRHHRAAPEQPPPQPKPKPQPQQQQQQWPRPQQPTPPPAAAPDA) are disordered. A lipid anchor (N-myristoyl glycine) is attached at Gly2. The span at 14-25 (EQPPPQPKPKPQ) shows a compositional bias: pro residues. Over residues 26–35 (PQQQQQQWPR) the composition is skewed to low complexity. Pro residues predominate over residues 36–45 (PQQPTPPPAA). Residues 66–324 (YTFGRELGRG…SAEILNHPWI (259 aa)) enclose the Protein kinase domain. ATP-binding positions include 72–80 (LGRGQFGVT) and Lys95. Asp190 acts as the Proton acceptor in catalysis. The autoinhibitory domain stretch occupies residues 330 to 360 (APDKPLDITVISRMKQFRAMNKLKKVALKVV). 4 EF-hand domains span residues 367–402 (EEIT…LGTK), 403–438 (ISES…MNRL), 439–474 (EKED…YDMG), and 475–509 (DDKT…NNPE). Ca(2+) contacts are provided by Asp380, Asp382, Ser384, Thr386, Glu391, Asp416, Asp418, Asn420, Thr422, Glu427, Asp452, Asp454, Ser456, Tyr458, Glu463, Asp487, Asp489, Asp491, Arg493, and Glu498.

This sequence belongs to the protein kinase superfamily. Ser/Thr protein kinase family. CDPK subfamily. Expressed in roots and leaf blades.

It localises to the membrane. It catalyses the reaction L-seryl-[protein] + ATP = O-phospho-L-seryl-[protein] + ADP + H(+). It carries out the reaction L-threonyl-[protein] + ATP = O-phospho-L-threonyl-[protein] + ADP + H(+). Activated by calcium. Autophosphorylation may play an important role in the regulation of the kinase activity. Functionally, may play a role in signal transduction pathways that involve calcium as a second messenger. This Oryza sativa subsp. japonica (Rice) protein is Calcium-dependent protein kinase 1.